Reading from the N-terminus, the 840-residue chain is Intracellular phospholipase A1 (840 aa).

Disordered regions lie at residues 1 to 142 (MSGS…RRRK) and 666 to 718 (KKNK…AANA). A compositionally biased stretch (basic and acidic residues) spans 26–39 (GKVKQKEKPKEKQM). Over residues 97 to 111 (SRPSGLPSNGNPGSS) the composition is skewed to low complexity. In terms of domain architecture, DDHD spans 564–827 (LEFKVKYLFA…ALFLANVLYC (264 aa)). The span at 668-680 (NKDDKTADARSGG) shows a compositional bias: basic and acidic residues. Positions 681–694 (DDENEDEDECDSDE) are enriched in acidic residues.

The protein belongs to the PA-PLA1 family.

It carries out the reaction 1,2-dihexadecanoyl-sn-glycero-3-phospho-(1D-myo-inositol) + H2O = 2-hexadecanoyl-sn-glycero-3-phospho-(1D-myo-inositol) + hexadecanoate + H(+). The enzyme catalyses a 1,2-diacyl-sn-glycero-3-phospho-L-serine + H2O = a 2-acyl-sn-glycero-3-phospho-L-serine + a fatty acid + H(+). It catalyses the reaction 1-hexadecanoyl-2-(9Z-octadecenoyl)-sn-glycero-3-phospho-L-serine + H2O = 2-(9Z-octadecenoyl)-sn-glycero-3-phospho-L-serine + hexadecanoate + H(+). The catalysed reaction is 1,2-di-(9Z-octadecenoyl)-sn-glycero-3-phosphocholine + H2O = (9Z-octadecenoyl)-sn-glycero-3-phosphocholine + (9Z)-octadecenoate + H(+). It carries out the reaction a 1,2-diacyl-sn-glycero-3-phosphocholine + H2O = a 1-acyl-sn-glycero-3-phosphocholine + a fatty acid + H(+). The enzyme catalyses 1,2-dihexadecanoyl-sn-glycero-3-phosphocholine + H2O = 1-hexadecanoyl-sn-glycero-3-phosphocholine + hexadecanoate + H(+). Its activity is regulated as follows. Inhibited by E-6-bromomethylene-3-1-naphthalenyl-2H-tetrahydropyran-2-one (BEL) in vitro. Hydrolyzes the ester bond at the sn-1 position of glycerophospholipids and produces 2-acyl lysophospholipids, being phosphatidylinositol (PI) its major substrate. PI is a versatile lipid that not only serves as a structural component of cellular membranes, but also plays important roles in signal transduction through distinct phosphorylated derivatives of the inositol head group. Catalyzes the hydrolysis of phosphatidylcholine at sn-2 position in vitro. Regulates asymmetric division, an important property of stem cells in C.elegans, by controlling the subcellular localizations of beta-catenin. The chain is Intracellular phospholipase A1 from Caenorhabditis elegans.